Reading from the N-terminus, the 415-residue chain is Serine/threonine transporter SstT (415 aa).

Transmembrane regions (helical) follow at residues 21 to 41 (ILLG…AALA), 45 to 65 (LGTL…LMLV), 83 to 103 (ILFL…VLSV), 142 to 162 (ALLN…GLAF), 193 to 213 (LGIF…ALWG), 217 to 237 (LLMV…PLIV), 299 to 319 (MAGA…TLGI), 331 to 351 (VVAS…LLLI), and 358 to 378 (FGIS…IGVL).

Belongs to the dicarboxylate/amino acid:cation symporter (DAACS) (TC 2.A.23) family.

It is found in the cell inner membrane. It carries out the reaction L-serine(in) + Na(+)(in) = L-serine(out) + Na(+)(out). The enzyme catalyses L-threonine(in) + Na(+)(in) = L-threonine(out) + Na(+)(out). Involved in the import of serine and threonine into the cell, with the concomitant import of sodium (symport system). The protein is Serine/threonine transporter SstT of Pectobacterium carotovorum subsp. carotovorum (strain PC1).